The primary structure comprises 496 residues: Probable serine/threonine-protein kinase DDB_G0284251 (496 aa).

Over residues 1–13 (MIEINNNHNNGNG) the composition is skewed to low complexity. Positions 1-25 (MIEINNNHNNGNGKQFPSSQIMPDS) are disordered. The Protein kinase domain occupies 36–288 (YTLGEKIGRG…AQELLQHPIF (253 aa)). ATP contacts are provided by residues 42–50 (IGRGAFGQV) and Lys65. Asp158 acts as the Proton acceptor in catalysis. Residues 323–345 (DWGSSSSTSGSSTPLSSSSSSSN) are disordered. A coiled-coil region spans residues 353-386 (EDFNKLQTTIKQQAQTISNLSEEILILKKELKEK). Positions 454 to 496 (PQLTPSSSRENISLSNSSSSIPNPNQNQNQNNKSKSKKFGFFS) are disordered. Residues 458–486 (PSSSRENISLSNSSSSIPNPNQNQNQNNK) show a composition bias toward low complexity. Over residues 487–496 (SKSKKFGFFS) the composition is skewed to basic residues.

This sequence belongs to the protein kinase superfamily. STE Ser/Thr protein kinase family. Mg(2+) is required as a cofactor.

It catalyses the reaction L-seryl-[protein] + ATP = O-phospho-L-seryl-[protein] + ADP + H(+). The enzyme catalyses L-threonyl-[protein] + ATP = O-phospho-L-threonyl-[protein] + ADP + H(+). The protein is Probable serine/threonine-protein kinase DDB_G0284251 of Dictyostelium discoideum (Social amoeba).